We begin with the raw amino-acid sequence, 190 residues long: dTTP/UTP pyrophosphatase (190 aa).

Aspartate 71 acts as the Proton acceptor in catalysis.

This sequence belongs to the Maf family. YhdE subfamily. The cofactor is a divalent metal cation.

It is found in the cytoplasm. The enzyme catalyses dTTP + H2O = dTMP + diphosphate + H(+). It carries out the reaction UTP + H2O = UMP + diphosphate + H(+). Functionally, nucleoside triphosphate pyrophosphatase that hydrolyzes dTTP and UTP. May have a dual role in cell division arrest and in preventing the incorporation of modified nucleotides into cellular nucleic acids. The protein is dTTP/UTP pyrophosphatase of Xanthomonas euvesicatoria pv. vesicatoria (strain 85-10) (Xanthomonas campestris pv. vesicatoria).